Consider the following 158-residue polypeptide: Probable host range protein 2-1 (158 aa).

It belongs to the poxviridae C7 protein family.

Plays a role for multiplication of the virus in different cell types. This is Probable host range protein 2-1 from Oryctolagus cuniculus (Rabbit).